The chain runs to 235 residues: 2,3-bisphosphoglycerate-dependent phosphoglycerate mutase 1 (235 aa).

Residues 8 to 15 (RHGESVAN), 21 to 22 (TG), Arg60, 87 to 90 (ERHY), Lys98, and 114 to 115 (RR) contribute to the substrate site. The Tele-phosphohistidine intermediate role is filled by His9. Catalysis depends on Glu87, which acts as the Proton donor/acceptor.

It belongs to the phosphoglycerate mutase family. BPG-dependent PGAM subfamily.

The enzyme catalyses (2R)-2-phosphoglycerate = (2R)-3-phosphoglycerate. Its pathway is carbohydrate degradation; glycolysis; pyruvate from D-glyceraldehyde 3-phosphate: step 3/5. Its function is as follows. Catalyzes the interconversion of 2-phosphoglycerate and 3-phosphoglycerate. The chain is 2,3-bisphosphoglycerate-dependent phosphoglycerate mutase 1 from Latilactobacillus sakei subsp. sakei (strain 23K) (Lactobacillus sakei subsp. sakei).